Consider the following 880-residue polypeptide: Leucine--tRNA ligase (880 aa).

Residues 46 to 56 carry the 'HIGH' region motif; sequence PYPSGALHMGH. The 'KMSKS' region signature appears at 638 to 642; the sequence is KMSKS. Lys641 contributes to the ATP binding site.

This sequence belongs to the class-I aminoacyl-tRNA synthetase family.

It is found in the cytoplasm. The catalysed reaction is tRNA(Leu) + L-leucine + ATP = L-leucyl-tRNA(Leu) + AMP + diphosphate. The protein is Leucine--tRNA ligase of Stenotrophomonas maltophilia (strain R551-3).